The primary structure comprises 492 residues: Bifunctional purine biosynthesis protein PurH (492 aa).

The 144-residue stretch at 1–144 (MKKAILSVSN…KNYKHVTTIV (144 aa)) folds into the MGS-like domain.

Belongs to the PurH family.

It catalyses the reaction (6R)-10-formyltetrahydrofolate + 5-amino-1-(5-phospho-beta-D-ribosyl)imidazole-4-carboxamide = 5-formamido-1-(5-phospho-D-ribosyl)imidazole-4-carboxamide + (6S)-5,6,7,8-tetrahydrofolate. The enzyme catalyses IMP + H2O = 5-formamido-1-(5-phospho-D-ribosyl)imidazole-4-carboxamide. The protein operates within purine metabolism; IMP biosynthesis via de novo pathway; 5-formamido-1-(5-phospho-D-ribosyl)imidazole-4-carboxamide from 5-amino-1-(5-phospho-D-ribosyl)imidazole-4-carboxamide (10-formyl THF route): step 1/1. Its pathway is purine metabolism; IMP biosynthesis via de novo pathway; IMP from 5-formamido-1-(5-phospho-D-ribosyl)imidazole-4-carboxamide: step 1/1. The protein is Bifunctional purine biosynthesis protein PurH of Staphylococcus aureus (strain bovine RF122 / ET3-1).